Here is a 239-residue protein sequence, read N- to C-terminus: uncharacterized protein (239 aa).

A signal peptide spans 1–19 (MPLLHRTIIFLQLLGTISS). Asn44, Asn58, Asn72, Asn92, Asn109, Asn136, Asn172, Asn192, and Asn213 each carry an N-linked (GlcNAc...) asparagine glycan.

The protein localises to the secreted. This is an uncharacterized protein from Caenorhabditis elegans.